We begin with the raw amino-acid sequence, 81 residues long: Putative membrane protein insertion efficiency factor (81 aa).

Belongs to the UPF0161 family.

Its subcellular location is the cell inner membrane. Functionally, could be involved in insertion of integral membrane proteins into the membrane. This chain is Putative membrane protein insertion efficiency factor, found in Pseudomonas syringae pv. syringae (strain B728a).